The sequence spans 20 residues: Dahlein-5.3 (20 aa).

As to expression, expressed by the skin dorsal glands.

The protein resides in the secreted. In terms of biological role, has no antimicrobial activity. Strongly inhibits the formation of NO by neuronal nitric oxide synthase at micromolar concentrations. The chain is Dahlein-5.3 from Ranoidea dahlii (Dahl's aquatic frog).